Consider the following 172-residue polypeptide: uncharacterized protein (172 aa).

Residues 109–129 (MLLLYLYYNLLLLTASTPLTF) traverse the membrane as a helical segment.

The protein localises to the membrane. This is an uncharacterized protein from Saccharomyces cerevisiae (strain ATCC 204508 / S288c) (Baker's yeast).